Reading from the N-terminus, the 361-residue chain is Chorismate synthase (361 aa).

NADP(+) is bound by residues Arg-48 and Arg-54. FMN contacts are provided by residues Arg-125–Ser-127, Asn-238–Ala-239, Gly-278, Lys-293–Ser-297, and Arg-319.

This sequence belongs to the chorismate synthase family. In terms of assembly, homotetramer. FMNH2 serves as cofactor.

It catalyses the reaction 5-O-(1-carboxyvinyl)-3-phosphoshikimate = chorismate + phosphate. The protein operates within metabolic intermediate biosynthesis; chorismate biosynthesis; chorismate from D-erythrose 4-phosphate and phosphoenolpyruvate: step 7/7. Its function is as follows. Catalyzes the anti-1,4-elimination of the C-3 phosphate and the C-6 proR hydrogen from 5-enolpyruvylshikimate-3-phosphate (EPSP) to yield chorismate, which is the branch point compound that serves as the starting substrate for the three terminal pathways of aromatic amino acid biosynthesis. This reaction introduces a second double bond into the aromatic ring system. The polypeptide is Chorismate synthase (Photorhabdus laumondii subsp. laumondii (strain DSM 15139 / CIP 105565 / TT01) (Photorhabdus luminescens subsp. laumondii)).